Reading from the N-terminus, the 114-residue chain is Protein preY, mitochondrial (114 aa).

The N-terminal 35 residues, 1–35 (MLSGARCRLASALRGTRAPPSAVARRCLHASGSRP), are a transit peptide targeting the mitochondrion. Positions 14–49 (RGTRAPPSAVARRCLHASGSRPLADRGKKTEEPPRD) are disordered. Over residues 36–49 (LADRGKKTEEPPRD) the composition is skewed to basic and acidic residues. In terms of domain architecture, TRM112 spans 51–97 (DPALLEFLVCPLSKKPLRYEASTNELINEELGIAYPIIDGIPNMIPQ).

This sequence belongs to the PREY family. As to quaternary structure, interacts (via TRM112 domain) with NDUFAF5; the interaction is direct and stabilizes NDUFAF5 protein. Interacts with COQ5; the interaction is direct, stabilizes COQ5 protein and associates PYURF with COQ enzyme complex.

Its subcellular location is the mitochondrion. Its function is as follows. In mitochondria, S-adenosylmethionine-dependent methyltransferase chaperone that supports both coenzyme Q biosynthesis, by stabilizing its components, such as COQ5, and NADH:ubiquinone oxidoreductase complex (complex I, MT-ND1) assembly, by stabilizing complex I assembly factors, such as NDUFAF5. The sequence is that of Protein preY, mitochondrial from Homo sapiens (Human).